The sequence spans 272 residues: Octanoyltransferase (272 aa).

Residues 1 to 12 (MQQDPPTSQPHT) are compositionally biased toward polar residues. Positions 1-20 (MQQDPPTSQPHTPQIVDGVK) are disordered. A BPL/LPL catalytic domain is found at 65-255 (HQRPNTVIYV…EMMSFQPYEM (191 aa)). Substrate is bound by residues 103–110 (RGGEITWH), 175–177 (AIG), and 188–190 (GFA). Catalysis depends on cysteine 206, which acts as the Acyl-thioester intermediate.

This sequence belongs to the LipB family.

The protein resides in the cytoplasm. The catalysed reaction is octanoyl-[ACP] + L-lysyl-[protein] = N(6)-octanoyl-L-lysyl-[protein] + holo-[ACP] + H(+). The protein operates within protein modification; protein lipoylation via endogenous pathway; protein N(6)-(lipoyl)lysine from octanoyl-[acyl-carrier-protein]: step 1/2. In terms of biological role, catalyzes the transfer of endogenously produced octanoic acid from octanoyl-acyl-carrier-protein onto the lipoyl domains of lipoate-dependent enzymes. Lipoyl-ACP can also act as a substrate although octanoyl-ACP is likely to be the physiological substrate. In Cutibacterium acnes (strain DSM 16379 / KPA171202) (Propionibacterium acnes), this protein is Octanoyltransferase.